A 286-amino-acid chain; its full sequence is Ribosomal RNA small subunit methyltransferase H (286 aa).

Residues 25-27 (GGH), Asp45, Leu79, Asp93, and Gln100 each bind S-adenosyl-L-methionine.

Belongs to the methyltransferase superfamily. RsmH family.

It localises to the cytoplasm. The enzyme catalyses cytidine(1402) in 16S rRNA + S-adenosyl-L-methionine = N(4)-methylcytidine(1402) in 16S rRNA + S-adenosyl-L-homocysteine + H(+). Specifically methylates the N4 position of cytidine in position 1402 (C1402) of 16S rRNA. In Petrotoga mobilis (strain DSM 10674 / SJ95), this protein is Ribosomal RNA small subunit methyltransferase H.